The sequence spans 390 residues: GTPase Obg (390 aa).

In terms of domain architecture, Obg spans Met1–Leu159. In terms of domain architecture, OBG-type G spans Ala160–Asn333. GTP-binding positions include Gly166–Ser173, Phe191–Ile195, Asp213–Gly216, Asn283–Asp286, and Ser314–Ala316. Residues Ser173 and Thr193 each coordinate Mg(2+). Positions Glu363–Val384 are enriched in acidic residues. The segment at Glu363–Arg390 is disordered.

The protein belongs to the TRAFAC class OBG-HflX-like GTPase superfamily. OBG GTPase family. As to quaternary structure, monomer. It depends on Mg(2+) as a cofactor.

It localises to the cytoplasm. Functionally, an essential GTPase which binds GTP, GDP and possibly (p)ppGpp with moderate affinity, with high nucleotide exchange rates and a fairly low GTP hydrolysis rate. Plays a role in control of the cell cycle, stress response, ribosome biogenesis and in those bacteria that undergo differentiation, in morphogenesis control. The polypeptide is GTPase Obg (Yersinia enterocolitica serotype O:8 / biotype 1B (strain NCTC 13174 / 8081)).